The chain runs to 202 residues: Tetranectin (202 aa).

An N-terminal signal peptide occupies residues 1–21 (MGFWGTYLLFCLFSFLSQLTA). Intrachain disulfides connect Cys71–Cys81, Cys98–Cys197, and Cys173–Cys189. The C-type lectin domain occupies 77 to 198 (VNLKCLLAFT…CRDQLPYICQ (122 aa)).

In terms of assembly, homotrimer. Highest expression in lung, skeletal muscle and heart. Expressed in retina.

It is found in the secreted. Tetranectin binds to plasminogen and to isolated kringle 4. May be involved in the packaging of molecules destined for exocytosis. Plays a role in retinal function. This chain is Tetranectin (Clec3b), found in Mus musculus (Mouse).